Consider the following 190-residue polypeptide: Sec-independent protein translocase protein TatB (190 aa).

Residues 2–22 (LPDIGGTELLVIAAVALIVVG) form a helical membrane-spanning segment. The interval 130-190 (IVSKPARKPP…KASTNSDITS (61 aa)) is disordered. Residues 134–144 (PARKPPAKKAA) are compositionally biased toward basic residues. Positions 145–163 (AKPAAKAELVSKPKASAKA) are enriched in low complexity.

Belongs to the TatB family. As to quaternary structure, the Tat system comprises two distinct complexes: a TatABC complex, containing multiple copies of TatA, TatB and TatC subunits, and a separate TatA complex, containing only TatA subunits. Substrates initially bind to the TatABC complex, which probably triggers association of the separate TatA complex to form the active translocon.

The protein resides in the cell inner membrane. Functionally, part of the twin-arginine translocation (Tat) system that transports large folded proteins containing a characteristic twin-arginine motif in their signal peptide across membranes. Together with TatC, TatB is part of a receptor directly interacting with Tat signal peptides. TatB may form an oligomeric binding site that transiently accommodates folded Tat precursor proteins before their translocation. The protein is Sec-independent protein translocase protein TatB of Caulobacter sp. (strain K31).